The primary structure comprises 695 residues: Pre-mRNA-splicing factor clf-1 (695 aa).

HAT repeat units lie at residues Glu52 to Glu84, Lys86 to Lys118, Arg120 to Met152, Gly154 to Arg185, Gly187 to Glu218, Gly220 to Arg259, Arg261 to Gln295, Val305 to Ser337, Gly339 to Phe373, Lys383 to Arg419, Gly421 to Lys452, Tyr454 to Gly486, Asp488 to Glu522, Gly524 to Asn555, Glu578 to Thr616, and Glu621 to Pro654.

The protein belongs to the crooked-neck family. Associated with the spliceosome.

The protein localises to the nucleus. Its function is as follows. Involved in pre-mRNA splicing and cell cycle progression. Required for the spliceosome assembly and initiation of the DNA replication. The chain is Pre-mRNA-splicing factor clf-1 (clf-1) from Neurospora crassa (strain ATCC 24698 / 74-OR23-1A / CBS 708.71 / DSM 1257 / FGSC 987).